Reading from the N-terminus, the 291-residue chain is HTH-type transcriptional regulator DgcR (291 aa).

The region spanning 1-58 (MRLRHIEVFHAIYTTGSITNAAKALHVSQPSVSKVLSHAEMQLGFKLFERVKGRLIPT) is the HTH lysR-type domain. Residues 18-37 (ITNAAKALHVSQPSVSKVLS) constitute a DNA-binding region (H-T-H motif).

This sequence belongs to the LysR transcriptional regulatory family.

Its function is as follows. Transcriptional regulator that positively regulates the expression of the D-Glu gene cluster (DGC). The cluster includes dgcN and dgcA, which are involved in a deamination-independent D-glutamate degradation pathway, dgcR itself, dgcT, dgcP and dgcH. Acts by binding the consensus sequence upstream of dgcR, dgcT, dgcP and dgcH. The sequence is that of HTH-type transcriptional regulator DgcR from Pseudoalteromonas sp.